Consider the following 116-residue polypeptide: Ribosome-binding factor A (116 aa).

It belongs to the RbfA family. As to quaternary structure, monomer. Binds 30S ribosomal subunits, but not 50S ribosomal subunits or 70S ribosomes.

The protein resides in the cytoplasm. One of several proteins that assist in the late maturation steps of the functional core of the 30S ribosomal subunit. Associates with free 30S ribosomal subunits (but not with 30S subunits that are part of 70S ribosomes or polysomes). Required for efficient processing of 16S rRNA. May interact with the 5'-terminal helix region of 16S rRNA. This chain is Ribosome-binding factor A, found in Chlorobium phaeobacteroides (strain DSM 266 / SMG 266 / 2430).